The sequence spans 350 residues: Twinfilin-1 (350 aa).

N-acetylserine is present on Ser2. Residues 2–139 form the ADF-H 1 domain; it reads SHQTGIQASE…SLHGYKKYLL (138 aa). 2 positions are modified to phosphoserine: Ser143 and Ser277. The 139-residue stretch at 175–313 folds into the ADF-H 2 domain; sequence LQGVAFPISR…TADFLYDEVH (139 aa). Tyr309 bears the Phosphotyrosine mark. Residues 317-350 form a disordered region; the sequence is HAHKQSFAKPKGPAGKRGIRRLIRGPAEAEATTD. Thr349 is subject to Phosphothreonine.

Belongs to the actin-binding proteins ADF family. Twinfilin subfamily. As to quaternary structure, interacts with G-actin; ADP-actin form and capping protein (CP). May also be able to interact with TWF2 and phosphoinositides, PI(4,5)P2. When bound to PI(4,5)P2, it is down-regulated. Interacts with ACTG1. In terms of processing, phosphorylated on serine and threonine residues. As to expression, widely expressed with highest levels in brain, liver and kidney. Also expressed in heart, lung and testis. Not detected in spleen or skeletal muscle.

The protein localises to the cytoplasm. The protein resides in the cytoskeleton. Its function is as follows. Actin-binding protein involved in motile and morphological processes. Inhibits actin polymerization, likely by sequestering G-actin. By capping the barbed ends of filaments, it also regulates motility. Seems to play an important role in clathrin-mediated endocytosis and distribution of endocytic organelles. In Mus musculus (Mouse), this protein is Twinfilin-1 (Twf1).